A 396-amino-acid chain; its full sequence is MAKAKFERNKPHVNVGTIGHVDHGKTTLTAAIATVAAKTFGGEAKDYAAIDSAPEEKARGITINTSHIEYDTADRHYAHVDCPGHADYVKNMITGAAQMDGAILVVSATDGPMPQTREHILLSRQVGVPYIMVFMNKCDMVDDEELLELVEMEVRELLSDYDFPGDDTPIIKGSALEALNGKDGKYGEPAVIELLQTLDTYIPEPERDIDKPFLMPIEDVFSISGRGTVVTGRVESGIVKVGDEIEIVGIRDTQKTTCTGVEMFRKLLDEGRAGENCGVLLRGTKREDVQRGQVLAKPGSITPHTKFDAEVYVLSKEEGGRHTPFLNGYRPQFYFRTTDVTGAISLQEGTEMVMPGDNVEMSVELIHPIAMDKGLRFAIREGGRTVGAGVVANVKD.

One can recognise a tr-type G domain in the interval K10–E206. The segment at G19–T26 is G1. G19–T26 is a binding site for GTP. T26 contributes to the Mg(2+) binding site. Positions G60–N64 are G2. The interval D81–G84 is G3. GTP is bound by residues D81–H85 and N136–D139. The tract at residues N136 to D139 is G4. Positions S174–L176 are G5.

Belongs to the TRAFAC class translation factor GTPase superfamily. Classic translation factor GTPase family. EF-Tu/EF-1A subfamily. Monomer.

Its subcellular location is the cytoplasm. The catalysed reaction is GTP + H2O = GDP + phosphate + H(+). Functionally, GTP hydrolase that promotes the GTP-dependent binding of aminoacyl-tRNA to the A-site of ribosomes during protein biosynthesis. This Psychrobacter sp. (strain PRwf-1) protein is Elongation factor Tu 1.